Reading from the N-terminus, the 474-residue chain is tRNA-2-methylthio-N(6)-dimethylallyladenosine synthase (474 aa).

The MTTase N-terminal domain maps to 3 to 120 (QKLHIKTWGC…LPEMINQIRA (118 aa)). Residues Cys12, Cys49, Cys83, Cys157, Cys161, and Cys164 each contribute to the [4Fe-4S] cluster site. The region spanning 143-375 (KAEGPTAFVS…QQRINNQAAQ (233 aa)) is the Radical SAM core domain. The 64-residue stretch at 378–441 (RAMLGTEQRV…TNSLRGDVVR (64 aa)) folds into the TRAM domain.

It belongs to the methylthiotransferase family. MiaB subfamily. In terms of assembly, monomer. Requires [4Fe-4S] cluster as cofactor.

It is found in the cytoplasm. It catalyses the reaction N(6)-dimethylallyladenosine(37) in tRNA + (sulfur carrier)-SH + AH2 + 2 S-adenosyl-L-methionine = 2-methylsulfanyl-N(6)-dimethylallyladenosine(37) in tRNA + (sulfur carrier)-H + 5'-deoxyadenosine + L-methionine + A + S-adenosyl-L-homocysteine + 2 H(+). Functionally, catalyzes the methylthiolation of N6-(dimethylallyl)adenosine (i(6)A), leading to the formation of 2-methylthio-N6-(dimethylallyl)adenosine (ms(2)i(6)A) at position 37 in tRNAs that read codons beginning with uridine. The protein is tRNA-2-methylthio-N(6)-dimethylallyladenosine synthase of Mannheimia succiniciproducens (strain KCTC 0769BP / MBEL55E).